The following is a 199-amino-acid chain: CASP-like protein 1B2 (199 aa).

Over 1–22 (MALQSEEKLEVGYSSLQPKTRK) the chain is Cytoplasmic. A helical transmembrane segment spans residues 23–43 (WVLLMLRVLAFFATAAATVVM). Over 44-74 (GLNKETKTLVVATVGSTPIKASLAAKFQHTP) the chain is Extracellular. Residues 75 to 95 (AFVFFVIANGLASIHNLVMIM) form a helical membrane-spanning segment. Topologically, residues 96–112 (GDLFGQKLDYKGLRLAM) are cytoplasmic. A helical membrane pass occupies residues 113-133 (IAILDMMTVALVSGGVSAAAF). Residues 134-163 (MAELGKNGNSHARWNKICDKFETFCDHGGG) are Extracellular-facing. A helical membrane pass occupies residues 164–184 (ALIASFAGLILMLIISVMSII). At 185–199 (KLLIKPKPDSTIVVP) the chain is on the cytoplasmic side.

Belongs to the Casparian strip membrane proteins (CASP) family. As to quaternary structure, homodimer and heterodimers.

The protein localises to the cell membrane. The sequence is that of CASP-like protein 1B2 from Populus trichocarpa (Western balsam poplar).